Reading from the N-terminus, the 203-residue chain is Galactoside O-acetyltransferase (203 aa).

Asp17, Ser71, Asn85, and Asp93 together coordinate substrate. Asn85 provides a ligand contact to acetyl-CoA. His115 acts as the Proton donor/acceptor in catalysis. Acetyl-CoA contacts are provided by residues Ser142, Ala160, 165–166 (TK), Arg180, and Arg183.

This sequence belongs to the transferase hexapeptide repeat family. Homotrimer. Post-translationally, the N-terminus of this protein is heterogeneous because the initiator methionine is only partially cleaved.

Its subcellular location is the cytoplasm. The enzyme catalyses a beta-D-galactoside + acetyl-CoA = a 6-acetyl-beta-D-galactoside + CoA. Catalyzes the CoA-dependent transfer of an acetyl group to the 6-O-methyl position of a range of galactosides, glucosides, and lactosides. May assist cellular detoxification by acetylating non-metabolizable pyranosides, thereby preventing their reentry into the cell. The protein is Galactoside O-acetyltransferase (lacA) of Escherichia coli (strain K12).